The primary structure comprises 168 residues: SsrA-binding protein (168 aa).

The segment at 1–20 (MAAQSKQAKPSGKQGGKKII) is disordered.

Belongs to the SmpB family.

The protein localises to the cytoplasm. Functionally, required for rescue of stalled ribosomes mediated by trans-translation. Binds to transfer-messenger RNA (tmRNA), required for stable association of tmRNA with ribosomes. tmRNA and SmpB together mimic tRNA shape, replacing the anticodon stem-loop with SmpB. tmRNA is encoded by the ssrA gene; the 2 termini fold to resemble tRNA(Ala) and it encodes a 'tag peptide', a short internal open reading frame. During trans-translation Ala-aminoacylated tmRNA acts like a tRNA, entering the A-site of stalled ribosomes, displacing the stalled mRNA. The ribosome then switches to translate the ORF on the tmRNA; the nascent peptide is terminated with the 'tag peptide' encoded by the tmRNA and targeted for degradation. The ribosome is freed to recommence translation, which seems to be the essential function of trans-translation. The sequence is that of SsrA-binding protein from Mycobacterium ulcerans (strain Agy99).